Here is a 151-residue protein sequence, read N- to C-terminus: Cell division protein SepF (151 aa).

It belongs to the SepF family. In terms of assembly, homodimer. Interacts with FtsZ.

It localises to the cytoplasm. Functionally, cell division protein that is part of the divisome complex and is recruited early to the Z-ring. Probably stimulates Z-ring formation, perhaps through the cross-linking of FtsZ protofilaments. Its function overlaps with FtsA. This chain is Cell division protein SepF, found in Desulfitobacterium hafniense (strain Y51).